A 490-amino-acid chain; its full sequence is Sec sixty-one protein homolog (490 aa).

The Cytoplasmic portion of the chain corresponds to 1 to 32 (MSGFRLIDIVKPILPILPEVELPFEKLPFDDK). A helical transmembrane segment spans residues 33–53 (IVYTIFAGLIYLFAQFPLVGL). Residues 54 to 121 (PKATTPNVND…DRELFQSLTK (68 aa)) lie on the Lumenal side of the membrane. A helical transmembrane segment spans residues 122–142 (VFAIVQYVILTNIFIFAGYFG). Over 143-146 (DDLS) the chain is Cytoplasmic. Residues 147–167 (VVQIGLINFQLVGAGIFTTLL) traverse the membrane as a helical segment. The Lumenal portion of the chain corresponds to 168 to 174 (AEVIDKG). Residues 175-195 (FGFSSGAMIINTVVIATNLVA) traverse the membrane as a helical segment. Residues 196–242 (DTFGVSQIKVGEDDQTEAQGALINLIQGLRSKHKTFIGGIISAFNRD) are Cytoplasmic-facing. A helical transmembrane segment spans residues 243 to 263 (YLPNLTTTIIVLAIAIIVCYL). The Lumenal portion of the chain corresponds to 264–293 (QSVRVELPIRSTRARGTNNVYPIKLLYTGC). Residues 294–314 (LSVLFSYTILFYIHIFAFVLI) traverse the membrane as a helical segment. Over 315–339 (QLVAKNEPTHIICKIMGHYENANNL) the chain is Cytoplasmic. The helical transmembrane segment at 340 to 360 (LAVPTFPLSLLAPPTSFFKGV) threads the bilayer. Residue Thr-361 is a topological domain, lumenal. Residues 362–382 (QQPLTFITYSAFILVTGIWFA) form a helical membrane-spanning segment. Residues 383–421 (DKWQAISGSSARDVALEFKDQGITLMGRREQNVAKELNK) lie on the Cytoplasmic side of the membrane. The chain crosses the membrane as a helical span at residues 422–442 (VIPIAAVTGASVLSLITVIGE). At 443–449 (SLGLKGK) the chain is on the lumenal side. The helical transmembrane segment at 450-470 (AAGIVVGIAGGFSLLEVITIE) threads the bilayer. The Cytoplasmic segment spans residues 471 to 490 (YQQSGGQSALNQVLGVPGAM).

It belongs to the SecY/SEC61-alpha family. In terms of assembly, component of the heterotrimeric Ssh1 complex, which is composed of SSH1, SBH2 and SSS1.

Its subcellular location is the endoplasmic reticulum membrane. In terms of biological role, part of the Ssh1 complex, which probably is the major component of a channel-forming translocon complex that may function exclusively in the cotranslational pathway of protein endoplasmic reticulum (ER) import. This is Sec sixty-one protein homolog (SSH1) from Saccharomyces cerevisiae (strain ATCC 204508 / S288c) (Baker's yeast).